A 111-amino-acid polypeptide reads, in one-letter code: Ribosome-binding factor A (111 aa).

This sequence belongs to the RbfA family. As to quaternary structure, monomer. Binds 30S ribosomal subunits, but not 50S ribosomal subunits or 70S ribosomes.

The protein localises to the cytoplasm. Functionally, one of several proteins that assist in the late maturation steps of the functional core of the 30S ribosomal subunit. Associates with free 30S ribosomal subunits (but not with 30S subunits that are part of 70S ribosomes or polysomes). Required for efficient processing of 16S rRNA. May interact with the 5'-terminal helix region of 16S rRNA. The sequence is that of Ribosome-binding factor A from Helicobacter pylori (strain HPAG1).